The chain runs to 443 residues: Glutamine synthetase (443 aa).

Positions 16–97 constitute a GS beta-grasp domain; it reads KRIKFVQLIF…VYGYIYKDGK (82 aa). A GS catalytic domain is found at 103 to 443; sequence PRGVLRRTLE…EWELERYFFI (341 aa). Mg(2+) contacts are provided by Glu126 and Glu128. Glu176 is a binding site for ATP. 2 residues coordinate Mg(2+): Glu181 and Glu188. L-glutamate is bound at residue Gly233. His237 is a binding site for Mg(2+). Residues 239–241 and Ser241 contribute to the ATP site; that span reads HIS. Residues Arg287, Glu293, and Arg305 each contribute to the L-glutamate site. Arg305 and Arg310 together coordinate ATP. Glu322 is a binding site for Mg(2+). Arg324 provides a ligand contact to L-glutamate.

This sequence belongs to the glutamine synthetase family. In terms of assembly, oligomer of 12 subunits arranged in the form of two hexagons. The cofactor is Mg(2+).

It localises to the cytoplasm. The catalysed reaction is L-glutamate + NH4(+) + ATP = L-glutamine + ADP + phosphate + H(+). Its function is as follows. Probably involved in nitrogen metabolism via ammonium assimilation. Catalyzes the ATP-dependent biosynthesis of glutamine from glutamate and ammonia. This chain is Glutamine synthetase, found in Pyrococcus horikoshii (strain ATCC 700860 / DSM 12428 / JCM 9974 / NBRC 100139 / OT-3).